A 361-amino-acid chain; its full sequence is tRNA-specific 2-thiouridylase MnmA (361 aa).

ATP contacts are provided by residues 8 to 15 (AMSGGVDS) and M35. The segment at 95–97 (NPD) is interaction with target base in tRNA. C100 functions as the Nucleophile in the catalytic mechanism. Residues C100 and C196 are joined by a disulfide bond. ATP is bound at residue G124. The interval 146 to 148 (KDQ) is interaction with tRNA. Residue C196 is the Cysteine persulfide intermediate of the active site. Positions 303-304 (RY) are interaction with tRNA.

It belongs to the MnmA/TRMU family.

It is found in the cytoplasm. It catalyses the reaction S-sulfanyl-L-cysteinyl-[protein] + uridine(34) in tRNA + AH2 + ATP = 2-thiouridine(34) in tRNA + L-cysteinyl-[protein] + A + AMP + diphosphate + H(+). Its function is as follows. Catalyzes the 2-thiolation of uridine at the wobble position (U34) of tRNA, leading to the formation of s(2)U34. The chain is tRNA-specific 2-thiouridylase MnmA from Chlamydia pneumoniae (Chlamydophila pneumoniae).